The following is a 408-amino-acid chain: Succinylornithine transaminase (408 aa).

Lys-252 carries the N6-(pyridoxal phosphate)lysine modification.

It belongs to the class-III pyridoxal-phosphate-dependent aminotransferase family. AstC subfamily. The cofactor is pyridoxal 5'-phosphate.

It carries out the reaction N(2)-succinyl-L-ornithine + 2-oxoglutarate = N-succinyl-L-glutamate 5-semialdehyde + L-glutamate. It functions in the pathway amino-acid degradation; L-arginine degradation via AST pathway; L-glutamate and succinate from L-arginine: step 3/5. Catalyzes the transamination of N(2)-succinylornithine and alpha-ketoglutarate into N(2)-succinylglutamate semialdehyde and glutamate. Can also act as an acetylornithine aminotransferase. This is Succinylornithine transaminase from Salmonella enteritidis PT4 (strain P125109).